We begin with the raw amino-acid sequence, 159 residues long: Ribosomal RNA large subunit methyltransferase H (159 aa).

S-adenosyl-L-methionine contacts are provided by residues leucine 76, glycine 108, and 127–132 (FGRLTL).

Belongs to the RNA methyltransferase RlmH family. Homodimer.

The protein resides in the cytoplasm. The enzyme catalyses pseudouridine(1915) in 23S rRNA + S-adenosyl-L-methionine = N(3)-methylpseudouridine(1915) in 23S rRNA + S-adenosyl-L-homocysteine + H(+). In terms of biological role, specifically methylates the pseudouridine at position 1915 (m3Psi1915) in 23S rRNA. This is Ribosomal RNA large subunit methyltransferase H from Listeria monocytogenes serotype 4b (strain CLIP80459).